The primary structure comprises 184 residues: NADH-quinone oxidoreductase subunit B 1 (184 aa).

Cysteine 37, cysteine 38, cysteine 103, and cysteine 132 together coordinate [4Fe-4S] cluster.

The protein belongs to the complex I 20 kDa subunit family. NDH-1 is composed of 14 different subunits. Subunits NuoB, C, D, E, F, and G constitute the peripheral sector of the complex. It depends on [4Fe-4S] cluster as a cofactor.

It is found in the cell membrane. The enzyme catalyses a quinone + NADH + 5 H(+)(in) = a quinol + NAD(+) + 4 H(+)(out). In terms of biological role, NDH-1 shuttles electrons from NADH, via FMN and iron-sulfur (Fe-S) centers, to quinones in the respiratory chain. The immediate electron acceptor for the enzyme in this species is believed to be a menaquinone. Couples the redox reaction to proton translocation (for every two electrons transferred, four hydrogen ions are translocated across the cytoplasmic membrane), and thus conserves the redox energy in a proton gradient. This Streptomyces griseus subsp. griseus (strain JCM 4626 / CBS 651.72 / NBRC 13350 / KCC S-0626 / ISP 5235) protein is NADH-quinone oxidoreductase subunit B 1.